A 351-amino-acid polypeptide reads, in one-letter code: UDP-3-O-acylglucosamine N-acyltransferase (351 aa).

Catalysis depends on His-240, which acts as the Proton acceptor.

The protein belongs to the transferase hexapeptide repeat family. LpxD subfamily. In terms of assembly, homotrimer.

The enzyme catalyses a UDP-3-O-[(3R)-3-hydroxyacyl]-alpha-D-glucosamine + a (3R)-hydroxyacyl-[ACP] = a UDP-2-N,3-O-bis[(3R)-3-hydroxyacyl]-alpha-D-glucosamine + holo-[ACP] + H(+). Its pathway is bacterial outer membrane biogenesis; LPS lipid A biosynthesis. In terms of biological role, catalyzes the N-acylation of UDP-3-O-acylglucosamine using 3-hydroxyacyl-ACP as the acyl donor. Is involved in the biosynthesis of lipid A, a phosphorylated glycolipid that anchors the lipopolysaccharide to the outer membrane of the cell. This Pseudomonas fluorescens (strain Pf0-1) protein is UDP-3-O-acylglucosamine N-acyltransferase.